A 267-amino-acid chain; its full sequence is Phosphate import ATP-binding protein PstB (267 aa).

Residues 21–262 (VAARNLDFYY…PSKQQTEDYI (242 aa)) form the ABC transporter domain. 53–60 (GPSGCGKS) is a binding site for ATP.

It belongs to the ABC transporter superfamily. Phosphate importer (TC 3.A.1.7) family. As to quaternary structure, the complex is composed of two ATP-binding proteins (PstB), two transmembrane proteins (PstC and PstA) and a solute-binding protein (PstS).

The protein localises to the cell inner membrane. It catalyses the reaction phosphate(out) + ATP + H2O = ADP + 2 phosphate(in) + H(+). Its function is as follows. Part of the ABC transporter complex PstSACB involved in phosphate import. Responsible for energy coupling to the transport system. The protein is Phosphate import ATP-binding protein PstB of Xanthomonas euvesicatoria pv. vesicatoria (strain 85-10) (Xanthomonas campestris pv. vesicatoria).